The sequence spans 565 residues: Maturase K (565 aa).

Belongs to the intron maturase 2 family. MatK subfamily.

Its subcellular location is the plastid. The protein localises to the chloroplast. Its function is as follows. Usually encoded in the trnK tRNA gene intron. Probably assists in splicing its own and other chloroplast group II introns. The polypeptide is Maturase K (Staurastrum punctulatum (Green alga)).